A 712-amino-acid polypeptide reads, in one-letter code: Diacylglycerol kinase 2 (712 aa).

2 consecutive Phorbol-ester/DAG-type zinc fingers follow at residues 72-133 (HHQW…AKDC) and 145-208 (RHHW…GDAC). The DAGKc domain maps to 338 to 479 (PDARPLLVFI…RWSVKIVEES (142 aa)).

Belongs to the eukaryotic diacylglycerol kinase family. As to quaternary structure, monomer. Expressed in rosette and cauline leaves, flowers, siliques and roots. Highly expressed in young leaves and at lower levels in older leaves. In young seedlings, expressed at the root-shoot junction zone and vascular bundles of the cotyledons. In older plants, expressed in root tip, central cylinder, root hair, leaf mesophyll cells and guard cells, sepals, filaments of the anthers, stigma, valves of young and early adult siliques and hilum of seeds.

Its subcellular location is the endoplasmic reticulum. The enzyme catalyses a 1,2-diacyl-sn-glycerol + ATP = a 1,2-diacyl-sn-glycero-3-phosphate + ADP + H(+). It catalyses the reaction 1-octadecanoyl-2-(5Z,8Z,11Z,14Z-eicosatetraenoyl)-sn-glycerol + ATP = 1-octadecanoyl-2-(5Z,8Z,11Z,14Z-eicosatetraenoyl)-sn-glycero-3-phosphate + ADP + H(+). It carries out the reaction 1,2-di-(9Z-octadecenoyl)-sn-glycerol + ATP = 1,2-di-(9Z-octadecenoyl)-sn-glycero-3-phosphate + ADP + H(+). In terms of biological role, phosphorylates the second messenger diacylglycerol (DAG) to generate phosphatidic acid (PA), another important signaling molecule. PA is required for plant development and responses to abiotic stress and pathogen attack. May be involved in the accumulation of PA during cold stress. Involved in response to freezing stress by modulating the accumulation of PA. Exhibits high specificity for the unsaturated DAG analogs 1-stearoyl-2-arachidonoyl-sn-glycerol (1,2-SAG) and 1,2-dioleoyl-sn-glycerol (1,2-DOG). Exhibits high specificity for 1-palmitoyl, 2-oleoyl-sn-glycerol (1,2 POG), 1-stearoyl, 2-linoleoyl-sn-glycerol (1,2-SLG) and 1-oleoyl, 2-palmitoyl-sn-glycerol (1,2-OPG). Has almost no activity toward 1,2-dioctanoyl-sn-glycerol (1,2-DOCG), 1,2-dipalmitoyl-sn-glycerol (1,2-DPG), 1,2-dimyristoyl-sn-glycerol (1,2-DMG) and 1-oleoyl-2-acetyl-sn-glycerol (1,2-OAG). Functions together with DGK4 in male gametophyte development and biosynthesis of phosphatidylglycerol and phosphatidylinositol in the endoplasmic reticulum (ER). Involved in PA production for pollen grain growth, as well as leaf and root growth. The polypeptide is Diacylglycerol kinase 2 (Arabidopsis thaliana (Mouse-ear cress)).